The chain runs to 431 residues: Probable 3-hydroxy-3-methylglutaryl-coenzyme A reductase (431 aa).

Catalysis depends on charge relay system residues E85 and D278. H375 (proton donor) is an active-site residue.

Belongs to the HMG-CoA reductase family.

The catalysed reaction is (R)-mevalonate + 2 NAD(+) + CoA = (3S)-3-hydroxy-3-methylglutaryl-CoA + 2 NADH + 2 H(+). The protein operates within metabolic intermediate metabolism; (R)-mevalonate degradation; (S)-3-hydroxy-3-methylglutaryl-CoA from (R)-mevalonate: step 1/1. In terms of biological role, converts HMG-CoA to mevalonate. In Borreliella burgdorferi (strain ATCC 35210 / DSM 4680 / CIP 102532 / B31) (Borrelia burgdorferi), this protein is Probable 3-hydroxy-3-methylglutaryl-coenzyme A reductase.